We begin with the raw amino-acid sequence, 404 residues long: LL-diaminopimelate aminotransferase (404 aa).

Substrate contacts are provided by Tyr-15 and Gly-42. Residues Tyr-72, 108-109 (AK), Tyr-132, Asn-188, Tyr-219, and 247-249 (SFS) each bind pyridoxal 5'-phosphate. 3 residues coordinate substrate: Lys-109, Tyr-132, and Asn-188. N6-(pyridoxal phosphate)lysine is present on Lys-250. The pyridoxal 5'-phosphate site is built by Arg-258 and Asn-288. 2 residues coordinate substrate: Asn-288 and Arg-384.

The protein belongs to the class-I pyridoxal-phosphate-dependent aminotransferase family. LL-diaminopimelate aminotransferase subfamily. As to quaternary structure, homodimer. The cofactor is pyridoxal 5'-phosphate.

It carries out the reaction (2S,6S)-2,6-diaminopimelate + 2-oxoglutarate = (S)-2,3,4,5-tetrahydrodipicolinate + L-glutamate + H2O + H(+). It participates in amino-acid biosynthesis; L-lysine biosynthesis via DAP pathway; LL-2,6-diaminopimelate from (S)-tetrahydrodipicolinate (aminotransferase route): step 1/1. Its function is as follows. Involved in the synthesis of meso-diaminopimelate (m-DAP or DL-DAP), required for both lysine and peptidoglycan biosynthesis. Catalyzes the direct conversion of tetrahydrodipicolinate to LL-diaminopimelate. In Lachnospira eligens (strain ATCC 27750 / DSM 3376 / VPI C15-48 / C15-B4) (Eubacterium eligens), this protein is LL-diaminopimelate aminotransferase.